A 78-amino-acid polypeptide reads, in one-letter code: MNPIVEFCISNMAKGGDYVYNKLDQDPGVDVLEYGCLQNCGVCSSGLYALVNGDIVEGDSPDDLLQNIYKHIEETWIF.

The protein belongs to the UPF0349 family.

This Staphylococcus carnosus (strain TM300) protein is UPF0349 protein Sca_0544.